A 91-amino-acid polypeptide reads, in one-letter code: Elongation factor 1-beta (91 aa).

Belongs to the EF-1-beta/EF-1-delta family.

Its function is as follows. Promotes the exchange of GDP for GTP in EF-1-alpha/GDP, thus allowing the regeneration of EF-1-alpha/GTP that could then be used to form the ternary complex EF-1-alpha/GTP/AAtRNA. The protein is Elongation factor 1-beta (ef1b) of Pyrococcus horikoshii (strain ATCC 700860 / DSM 12428 / JCM 9974 / NBRC 100139 / OT-3).